The following is a 178-amino-acid chain: Caveolin-1 (178 aa).

Residue S2 is modified to N-acetylserine. At S2 the chain carries Phosphoserine. A required for homooligomerization region spans residues S2 to V94. Over S2 to S104 the chain is Cytoplasmic. K5 bears the N6-acetyllysine; alternate mark. Residue K5 forms a Glycyl lysine isopeptide (Lys-Gly) (interchain with G-Cter in ubiquitin); alternate linkage. Y6 bears the Phosphotyrosine mark. S9 bears the Phosphoserine mark. A Phosphotyrosine; by ABL1 modification is found at Y14. Residue Y25 is modified to Phosphotyrosine. Residues K26, K30, K39, K47, and K57 each participate in a glycyl lysine isopeptide (Lys-Gly) (interchain with G-Cter in ubiquitin) cross-link. Positions D82 to V94 are interaction with CAVIN3. The segment at residues A105 to L125 is an intramembrane region (helical). The Cytoplasmic segment spans residues H126–I178. The interval V131–Q142 is interacts with SPRY1, SPRY2, SPRY3 and SPRY4. 3 S-palmitoyl cysteine lipidation sites follow: C133, C143, and C156. The interacts with SPRY1, SPRY2, and SPRY4 stretch occupies residues S149–F160. Positions F167–I178 are interacts with SPRY1, SPRY2, SPRY3 and SPRY4.

It belongs to the caveolin family. As to quaternary structure, homooligomer. Interacts with GLIPR2. Interacts with NOSTRIN. Interacts with SNAP25 and STX1A. Interacts (via the N-terminus) with DPP4; the interaction is direct. Interacts with CTNNB1, CDH1 and JUP. Interacts with PACSIN2; this interaction induces membrane tubulation. Interacts with SLC7A9. Interacts with BMX and BTK. Interacts with TGFBR1. Interacts with CAVIN3 (via leucine-zipper domain) in a cholesterol-sensitive manner. Interacts with CAVIN1. Interacts with EHD2 in a cholesterol-dependent manner. Forms a ternary complex with UBXN6 and VCP; mediates CAV1 targeting to lysosomes for degradation. Interacts with ABCG1; this interaction regulates ABCG1-mediated cholesterol efflux. Interacts with NEU3; this interaction enhances NEU3 sialidase activity within caveola. Interacts (via C-terminus) with SPRY1, SPRY2 (via C-terminus), SPRY3, and SPRY4. Interacts with IGFBP5; this interaction allows trafficking of IGFBP5 from the plasma membrane to the nucleus. In terms of processing, phosphorylated at Tyr-14 by ABL1 in response to oxidative stress. Ubiquitinated. Undergo monoubiquitination and multi- and/or polyubiquitination. Monoubiquitination of N-terminal lysines promotes integration in a ternary complex with UBXN6 and VCP which promotes oligomeric CAV1 targeting to lysosomes for degradation. Ubiquitinated by ZNRF1; leading to degradation and modulation of the TLR4-mediated immune response.

It localises to the golgi apparatus membrane. The protein localises to the cell membrane. The protein resides in the membrane. Its subcellular location is the caveola. It is found in the membrane raft. Its function is as follows. May act as a scaffolding protein within caveolar membranes. Forms a stable heterooligomeric complex with CAV2 that targets to lipid rafts and drives caveolae formation. Mediates the recruitment of CAVIN proteins (CAVIN1/2/3/4) to the caveolae. Interacts directly with G-protein alpha subunits and can functionally regulate their activity. Involved in the costimulatory signal essential for T-cell receptor (TCR)-mediated T-cell activation. Its binding to DPP4 induces T-cell proliferation and NF-kappa-B activation in a T-cell receptor/CD3-dependent manner. Recruits CTNNB1 to caveolar membranes and may regulate CTNNB1-mediated signaling through the Wnt pathway. Negatively regulates TGFB1-mediated activation of SMAD2/3 by mediating the internalization of TGFBR1 from membrane rafts leading to its subsequent degradation. Binds 20(S)-hydroxycholesterol (20(S)-OHC). This is Caveolin-1 (CAV1) from Bos taurus (Bovine).